Reading from the N-terminus, the 505-residue chain is DNA primase DnaG (505 aa).

Positions 167–241 (DAVIVVEGRA…DVDYVAFAPP (75 aa)) constitute a Toprim domain. Mg(2+)-binding residues include glutamate 173, aspartate 215, and aspartate 217. The interval 268–410 (DEPNLREAAT…PLDNEPRSIE (143 aa)) is disordered. The span at 318 to 327 (AGVVAGGARS) shows a compositional bias: low complexity. 2 stretches are compositionally biased toward acidic residues: residues 349-376 (GEVDEVGEDREGDMESDSDTADINDAEF) and 384-402 (PNLDEAADAESVEETDAPL).

Belongs to the archaeal DnaG primase family. As to quaternary structure, forms a ternary complex with MCM helicase and DNA. Mg(2+) serves as cofactor.

It carries out the reaction ssDNA + n NTP = ssDNA/pppN(pN)n-1 hybrid + (n-1) diphosphate.. Functionally, RNA polymerase that catalyzes the synthesis of short RNA molecules used as primers for DNA polymerase during DNA replication. In Halorubrum lacusprofundi (strain ATCC 49239 / DSM 5036 / JCM 8891 / ACAM 34), this protein is DNA primase DnaG.